Here is a 174-residue protein sequence, read N- to C-terminus: MSSAAADHWAWLLVLSFVFGCNVLRVLLPSFSSFMSRVLQKDAEQESQMRAEIQDMKQELSTVNMMDEFARYARLERKINKMTDKLKTHVKARTAQLAKIKWVISVAFYVLQAALMISLIWKYYSVPVAVVPSKWITPLDRLVAFPTRVAGGVGITCWILVCNKVVAIVLHPFS.

Over 1–8 (MSSAAADH) the chain is Lumenal. A helical transmembrane segment spans residues 9-29 (WAWLLVLSFVFGCNVLRVLLP). Residues 30-99 (SFSSFMSRVL…VKARTAQLAK (70 aa)) are Cytoplasmic-facing. Positions 39–94 (LQKDAEQESQMRAEIQDMKQELSTVNMMDEFARYARLERKINKMTDKLKTHVKART) form a coiled coil. The interaction with GET3/TRC40 stretch occupies residues 39–97 (LQKDAEQESQMRAEIQDMKQELSTVNMMDEFARYARLERKINKMTDKLKTHVKARTAQL). A helical transmembrane segment spans residues 100 to 120 (IKWVISVAFYVLQAALMISLI). Topologically, residues 121-148 (WKYYSVPVAVVPSKWITPLDRLVAFPTR) are lumenal. Residues 149–169 (VAGGVGITCWILVCNKVVAIV) form a helical membrane-spanning segment. The Cytoplasmic portion of the chain corresponds to 170 to 174 (LHPFS).

It belongs to the WRB/GET1 family. Component of the Golgi to ER traffic (GET) complex, which is composed of GET1/WRB, CAMLG/GET2 and GET3. Within the complex, GET1 and CAMLG form a heterotetramer which is stabilized by phosphatidylinositol binding and which binds to the GET3 homodimer. Interacts with CAMLG (via C-terminus). GET3 shows a higher affinity for CAMLG than for GET1.

Its subcellular location is the endoplasmic reticulum membrane. Required for the post-translational delivery of tail-anchored (TA) proteins to the endoplasmic reticulum. Together with CAMLG/GET2, acts as a membrane receptor for soluble GET3/TRC40, which recognizes and selectively binds the transmembrane domain of TA proteins in the cytosol. Required to ensure correct topology and ER insertion of CAMLG. The chain is Guided entry of tail-anchored proteins factor 1 from Pongo abelii (Sumatran orangutan).